A 60-amino-acid chain; its full sequence is Acrosin (60 aa).

An N-linked (GlcNAc...) asparagine glycan is attached at asparagine 3. One can recognise a Peptidase S1 domain in the interval 24–60 (IIGGQDAAHGSWPWMVSLQIFTYHNNRRYHVCGGSLL).

This sequence belongs to the peptidase S1 family. As to quaternary structure, heavy chain (catalytic) and a light chain linked by two disulfide bonds. Forms a heterodimer with SERPINA5.

It carries out the reaction Preferential cleavage: Arg-|-Xaa, Lys-|-Xaa.. With respect to regulation, inhibited by SERPINA5. In terms of biological role, acrosin is the major protease of mammalian spermatozoa. It is a serine protease of trypsin-like cleavage specificity, it is synthesized in a zymogen form, proacrosin and stored in the acrosome. This Capra hircus (Goat) protein is Acrosin (ACR).